Consider the following 363-residue polypeptide: Insulin gene enhancer protein ISL-3 (363 aa).

LIM zinc-binding domains are found at residues 27–80 (CVGC…CKRD) and 89–143 (CAKC…RADH). Residues 191–250 (TTRVRTVLNEKQLHTLRTCYNANPRPDALMREQLVEMTGLSPRVIRVWFQNKRCKDKKRS) constitute a DNA-binding region (homeobox). Residues 328 to 363 (FSESGSLGNSSGSDVTSLSSHLPDTPNSMVPSPVET) form a disordered region. The segment covering 329–340 (SESGSLGNSSGS) has biased composition (low complexity). Residues 341–363 (DVTSLSSHLPDTPNSMVPSPVET) are compositionally biased toward polar residues.

It is found in the nucleus. In terms of biological role, binds to one of the cis-acting domain of the insulin gene enhancer. May be involved in subtype specialization of primary motoneurons. The sequence is that of Insulin gene enhancer protein ISL-3 (isl3) from Oncorhynchus tshawytscha (Chinook salmon).